Here is a 328-residue protein sequence, read N- to C-terminus: Mitochondrial thiamine pyrophosphate carrier 1 (328 aa).

3 Solcar repeats span residues 12–110 (GTRR…TTQL), 120–208 (PQPI…LRPV), and 221–316 (PPGS…ALKL). 6 consecutive transmembrane segments (helical) span residues 17-37 (VVLA…PLDV), 79-99 (LTGL…YGGI), 126-146 (FISG…LDLL), 185-205 (SAAV…YEAL), 227-247 (AAAG…LDLV), and 291-308 (GLTV…VTMW).

This sequence belongs to the mitochondrial carrier (TC 2.A.29) family.

It localises to the mitochondrion inner membrane. Functionally, mitochondrial transporter that mediates uptake of thiamine pyrophosphate (ThPP) into mitochondria. This is Mitochondrial thiamine pyrophosphate carrier 1 (tpc1) from Emericella nidulans (strain FGSC A4 / ATCC 38163 / CBS 112.46 / NRRL 194 / M139) (Aspergillus nidulans).